The primary structure comprises 319 residues: Putrescine hydroxycinnamoyltransferase 2 (319 aa).

Active-site proton acceptor residues include His160 and Asp301.

It belongs to the plant acyltransferase family.

Functionally, hydroxycinnamoyl transferase that catalyzes the transfer of an acyl from p-coumaryol-CoA to putrescine, to produce coumaroyl putrescine. This chain is Putrescine hydroxycinnamoyltransferase 2, found in Oryza sativa subsp. japonica (Rice).